The sequence spans 452 residues: THO complex subunit 5A (452 aa).

The protein belongs to the THOC5 family. As to quaternary structure, component of the THO complex, which is composed of THO1, THO2, THO3, THO5, THO6 and THO7.

Its subcellular location is the nucleus. Functionally, acts as a component of the THO subcomplex of the TREX complex which is thought to couple mRNA transcription, processing and nuclear export. The protein is THO complex subunit 5A (THO5A) of Arabidopsis thaliana (Mouse-ear cress).